The following is a 475-amino-acid chain: Tetratricopeptide repeat protein 29 (475 aa).

TPR repeat units lie at residues 92–131 (DALREAARVRSLFWLQKPLEEQPDKLDYFYHYLTRAEDAE), 136–173 (FEDVYNNLYALACYFNNPEDKWVRNHFYERCFKIAQLI), 182–215 (AEAHMHMGLLYEEDGQLLEAAEHYEAFHQLTQGR), 234–267 (LRTYRLLSDKMLQNKEYKQAIKILIKASEIAKEG), 274–307 (GEASYYLGLAHLAAEEYETALTVLDTYCKISTEL), 314–347 (GRAYEAIAKVLQSQGNTTEAIKYLKKFVKIARNN), and 354–387 (VRASTMLGDIYNEKGHYNKASQRFQQAFDTTVEL). Positions 436–475 (DIEPDPVTEEFRGSTVETVSQNSEHLEELSRFPGDQKNET) are disordered. The segment covering 459–475 (EHLEELSRFPGDQKNET) has biased composition (basic and acidic residues).

Its subcellular location is the cytoplasm. The protein localises to the cytoskeleton. It localises to the flagellum axoneme. Functionally, axonemal protein which is implicated in axonemal and/or peri-axonemal structure assembly and regulates flagellum assembly and beating and therefore sperm motility. In Macaca fascicularis (Crab-eating macaque), this protein is Tetratricopeptide repeat protein 29 (TTC29).